A 911-amino-acid chain; its full sequence is ATP-dependent DNA helicase Q-like 5 (911 aa).

Positions 1-84 (MDFDSDSDGS…PPPSPLFTNL (84 aa)) are disordered. The span at 20–48 (SFPSSPPQLQSPAKHVPPVSRKMTSSSSR) shows a compositional bias: low complexity. Residues 54–79 (PTHPPPNPSQEAPVPSPYPPPPPPSP) are compositionally biased toward pro residues. Positions 278–448 (IKMILGGSST…MSSLEIPSTN (171 aa)) constitute a Helicase ATP-binding domain. Residue 291–298 (LPTGAGKS) participates in ATP binding. Positions 390–393 (DEAH) match the DEAH box motif. Positions 470–628 (RMKDLLILME…VFSTETKQHE (159 aa)) constitute a Helicase C-terminal domain.

It belongs to the helicase family. RecQ subfamily. In terms of tissue distribution, mostly expressed in roots, seedlings, shoots, shoot apical mersitem, flowers, and siliques.

Its subcellular location is the nucleus. It catalyses the reaction Couples ATP hydrolysis with the unwinding of duplex DNA by translocating in the 3'-5' direction.. It carries out the reaction ATP + H2O = ADP + phosphate + H(+). Functionally, 3'-5' DNA helicase that may play a role in the repair of DNA. This chain is ATP-dependent DNA helicase Q-like 5 (RECQL5), found in Arabidopsis thaliana (Mouse-ear cress).